Reading from the N-terminus, the 358-residue chain is 3-isopropylmalate dehydrogenase (358 aa).

Residues Arg-92, Arg-102, Arg-130, and Asp-224 each coordinate substrate. Asp-224, Asp-248, and Asp-252 together coordinate Mg(2+). 282–294 provides a ligand contact to NAD(+); the sequence is GSAPDIAGQGIAN.

Belongs to the isocitrate and isopropylmalate dehydrogenases family. LeuB type 1 subfamily. Homodimer. The cofactor is Mg(2+). Requires Mn(2+) as cofactor.

The protein resides in the cytoplasm. It carries out the reaction (2R,3S)-3-isopropylmalate + NAD(+) = 4-methyl-2-oxopentanoate + CO2 + NADH. It participates in amino-acid biosynthesis; L-leucine biosynthesis; L-leucine from 3-methyl-2-oxobutanoate: step 3/4. Catalyzes the oxidation of 3-carboxy-2-hydroxy-4-methylpentanoate (3-isopropylmalate) to 3-carboxy-4-methyl-2-oxopentanoate. The product decarboxylates to 4-methyl-2 oxopentanoate. The polypeptide is 3-isopropylmalate dehydrogenase (Bordetella parapertussis (strain 12822 / ATCC BAA-587 / NCTC 13253)).